A 146-amino-acid polypeptide reads, in one-letter code: Leghemoglobin 49 (146 aa).

A Globin domain is found at 2–146; it reads GFTQQQEALV…LATAIKKAMS (145 aa). Tyr24 and Tyr29 each carry nitrated tyrosine. Position 44 (Ser44) interacts with heme b. A Phosphoserine modification is found at Ser44. His61 lines the O2 pocket. Heme b contacts are provided by His93 and Lys96. Residue Tyr134 is modified to Nitrated tyrosine.

This sequence belongs to the plant globin family. In terms of assembly, monomer. Nitrated in effective nodules and particularly in hypoxic conditions; this mechanism may play a protective role in the symbiosis by buffering toxic peroxynitrite NO(2)(-). Nitration level decrease during nodule senescence. Post-translationally, phosphorylation at Ser-44 disrupts the molecular environment of its porphyrin ring oxygen binding pocket, thus leading to a reduced oxygen consumption and to the delivery of oxygen O(2) to symbiosomes. In terms of tissue distribution, accumulates in root nodules after inoculation by bacteria of the genus Rhizobium.

It is found in the cytoplasm. The protein resides in the cytosol. The protein localises to the nucleus. Its function is as follows. Leghemoglobin that reversibly binds oxygen O(2) through a pentacoordinated heme iron. In root nodules, facilitates the diffusion of oxygen to the bacteroids while preventing the bacterial nitrogenase from being inactivated by buffering dioxygen, nitric oxide and carbon monoxide, and promoting the formation of reactive oxygen species (ROS, e.g. H(2)O(2)). This role is essential for symbiotic nitrogen fixation (SNF). This chain is Leghemoglobin 49, found in Vicia faba (Broad bean).